A 375-amino-acid chain; its full sequence is Decapping and exoribonuclease protein Rai1 (375 aa).

Residues arginine 43 and 120-122 (LRG) contribute to the substrate site. 5 residues coordinate Mg(2+): glutamate 180, glutamate 222, aspartate 224, glutamate 247, and leucine 248. Residue glutamate 222 coordinates substrate. Substrate contacts are provided by lysine 249 and glutamine 274.

The protein belongs to the DXO/Dom3Z family. As to quaternary structure, interacts with Rat1. Mg(2+) serves as cofactor.

The catalysed reaction is a 5'-end triphospho-ribonucleoside in mRNA + H2O = a 5'-end phospho-ribonucleoside in mRNA + diphosphate + H(+). The enzyme catalyses a 5'-end NAD(+)-phospho-ribonucleoside in mRNA + H2O = a 5'-end phospho-ribonucleoside in mRNA + NAD(+) + H(+). It carries out the reaction a 5'-end (N(7)-methyl 5'-triphosphoguanosine)-ribonucleoside-ribonucleotide in mRNA + H2O = a (N(7)-methyl 5'-triphosphoguanosine)-nucleoside + a 5'-end phospho-ribonucleoside in mRNA + H(+). Its function is as follows. Decapping enzyme for NAD-capped RNAs: specifically hydrolyzes the nicotinamide adenine dinucleotide (NAD) cap from a subset of RNAs by removing the entire NAD moiety from the 5'-end of an NAD-capped RNA. The NAD-cap is present at the 5'-end of some RNAs and snoRNAs. In contrast to the canonical 5'-end N7 methylguanosine (m7G) cap, the NAD cap promotes mRNA decay. Also acts as a non-canonical decapping enzyme that removes the entire cap structure of m7G capped or incompletely capped RNAs and mediates their subsequent degradation. Specifically degrades pre-mRNAs with a defective 5'-end m7G cap and is part of a pre-mRNA capping quality control. Possesses 5'-pyrophosphohydrolase activity, hydrolyzing the 5'-end triphosphate to release pyrophosphates, and 5'-3' exonuclease activity. May be involved in RNA degradation in the nucleus. In Drosophila melanogaster (Fruit fly), this protein is Decapping and exoribonuclease protein Rai1.